Consider the following 67-residue polypeptide: Guanine nucleotide-binding protein G(I)/G(S)/G(O) subunit gamma-13 (67 aa).

Cysteine 64 carries the post-translational modification Cysteine methyl ester. Cysteine 64 carries S-farnesyl cysteine lipidation. Positions 65–67 (TIL) are cleaved as a propeptide — removed in mature form.

This sequence belongs to the G protein gamma family. G proteins are composed of 3 units, alpha, beta and gamma.

Its subcellular location is the cell membrane. Its function is as follows. Guanine nucleotide-binding proteins (G proteins) are involved as a modulator or transducer in various transmembrane signaling systems. The beta and gamma chains are required for the GTPase activity, for replacement of GDP by GTP, and for G protein-effector interaction. The chain is Guanine nucleotide-binding protein G(I)/G(S)/G(O) subunit gamma-13 (GNG13) from Homo sapiens (Human).